Consider the following 410-residue polypeptide: Peptidase T (410 aa).

Residue His-79 participates in Zn(2+) binding. Asp-81 is a catalytic residue. Asp-142 lines the Zn(2+) pocket. The Proton acceptor role is filled by Glu-176. The Zn(2+) site is built by Glu-177, Asp-199, and His-381.

The protein belongs to the peptidase M20B family. The cofactor is Zn(2+).

It is found in the cytoplasm. It carries out the reaction Release of the N-terminal residue from a tripeptide.. Functionally, cleaves the N-terminal amino acid of tripeptides. The chain is Peptidase T from Bacillus cereus (strain ATCC 10987 / NRS 248).